Reading from the N-terminus, the 242-residue chain is MIKAIVLDIEGTTCPVTFVSQTLFPFARRQLSKTICSENRPSNVTAAIEEAIAEWKNDPESKSQALLLRASNQNQPTSEDIIHYFDHLIQNDRKSTALKELQGIIWEQGYAAGELQSPLYGDVVPALNAWTQQGITLAVYSSGSVKAQQLLYAHTTDGDITNRFSQWFDTRTGPKLNADSYRIISQSIGLKPASILFVSDHPRECDAAAEAGMETRFCLREGNPFSDGGDHQMIHNLGEIKL.

Belongs to the HAD-like hydrolase superfamily. MasA/MtnC family. In terms of assembly, monomer. Mg(2+) is required as a cofactor.

The enzyme catalyses 5-methylsulfanyl-2,3-dioxopentyl phosphate + H2O = 1,2-dihydroxy-5-(methylsulfanyl)pent-1-en-3-one + phosphate. It participates in amino-acid biosynthesis; L-methionine biosynthesis via salvage pathway; L-methionine from S-methyl-5-thio-alpha-D-ribose 1-phosphate: step 3/6. Its pathway is amino-acid biosynthesis; L-methionine biosynthesis via salvage pathway; L-methionine from S-methyl-5-thio-alpha-D-ribose 1-phosphate: step 4/6. Its function is as follows. Bifunctional enzyme that catalyzes the enolization of 2,3-diketo-5-methylthiopentyl-1-phosphate (DK-MTP-1-P) into the intermediate 2-hydroxy-3-keto-5-methylthiopentenyl-1-phosphate (HK-MTPenyl-1-P), which is then dephosphorylated to form the acireductone 1,2-dihydroxy-3-keto-5-methylthiopentene (DHK-MTPene). The sequence is that of Enolase-phosphatase E1 from Synechococcus sp. (strain WH7803).